Consider the following 250-residue polypeptide: Probable xyloglucan-specific endo-beta-1,4-glucanase A (250 aa).

The signal sequence occupies residues 1–19 (MKLSVLSLASLASAAALNA). N-linked (GlcNAc...) asparagine glycosylation occurs at N72.

It belongs to the glycosyl hydrolase 12 (cellulase H) family.

The protein resides in the secreted. It carries out the reaction xyloglucan + H2O = xyloglucan oligosaccharides.. In terms of biological role, catalyzes endohydrolysis of 1,4-beta-D-glucosidic linkages in xyloglucan with retention of the beta-configuration of the glycosyl residues. Specific for xyloglucan and does not hydrolyze other cell wall components. The chain is Probable xyloglucan-specific endo-beta-1,4-glucanase A (xgeA) from Aspergillus terreus (strain NIH 2624 / FGSC A1156).